The primary structure comprises 115 residues: Hydrogenase maturation factor HypA (115 aa).

Histidine 2 is a binding site for Ni(2+). Residues cysteine 73, cysteine 76, cysteine 89, and cysteine 92 each contribute to the Zn(2+) site.

The protein belongs to the HypA/HybF family.

Its function is as follows. Involved in the maturation of [NiFe] hydrogenases. Required for nickel insertion into the metal center of the hydrogenase. The sequence is that of Hydrogenase maturation factor HypA from Polaromonas naphthalenivorans (strain CJ2).